A 230-amino-acid chain; its full sequence is MTASAPVITVDGPSGAGKGTLCKALAESLDWRLLDSGAIYRVLALAALHHQVDISTEEALVPLAAHLDVRFVSQNGQLKVILEGEDVSNEIRTETVGNTASQAAAFPRVREALLRRQRAFREPPGLIADGRDMGTVVFPDAPVKIFLDASSQERAHRRMLQLQEKGFNVNFERLLSEIQERDSRDRNRAIAPLVPATDALVLDSTSMSIEQVIEQALAYAQRILALPLKK.

ATP is bound at residue 12-20; the sequence is GPSGAGKGT.

It belongs to the cytidylate kinase family. Type 1 subfamily.

The protein resides in the cytoplasm. It carries out the reaction CMP + ATP = CDP + ADP. The enzyme catalyses dCMP + ATP = dCDP + ADP. The sequence is that of Cytidylate kinase from Yersinia enterocolitica serotype O:8 / biotype 1B (strain NCTC 13174 / 8081).